Consider the following 388-residue polypeptide: Staphopain A (388 aa).

The signal sequence occupies residues 1–25 (MKRNFPKLIALSLILSLSVTPIANA). A propeptide spanning residues 26–214 (ESNSNIKAKD…TSQFKSNNYT (189 aa)) is cleaved from the precursor. Residues cysteine 238, histidine 334, and asparagine 355 contribute to the active site.

It belongs to the peptidase C47 family. As to quaternary structure, in the cytoplasm, prematurely activated/folded ScpA forms a stable non-covalent complex with ScpB. Cleavage leads to the activation of ScpA probably by an auto-catalytic manner.

It localises to the secreted. The catalysed reaction is Broad endopeptidase action on proteins including elastin, but rather limited hydrolysis of small-molecule substrates. Assays are conveniently made with hemoglobin, casein or Z-Phe-Arg-NHMec as substrate.. With respect to regulation, prematurely activated/folded staphopain A is inhibited by staphostatin A (ScpB), which is probably required to protect staphylococcal cytoplasmic proteins from degradation by ScpA. Functionally, cysteine protease that plays an important role in the inhibition of host innate immune response. Cleaves host elastins found in connective tissues, pulmonary surfactant protein A in the lungs, and the chemokine receptor CXCR2 on leukocytes. Proteolytic cleavage of surfactant protein A impairs bacterial phagocytosis by neutrophils while CXCR2 degradation blocks neutrophil activation and chemotaxis. Additionally, promotes vascular leakage by activating the plasma kallikerin/kinin system, resulting in hypotension. The protein is Staphopain A (sspP) of Staphylococcus aureus (strain MSSA476).